Reading from the N-terminus, the 824-residue chain is RelA-associated inhibitor (824 aa).

Methionine 1 carries the N-acetylmethionine modification. 2 disordered regions span residues 48–87 (SLWS…SPQK) and 99–271 (RSES…YERL). A phosphoserine mark is found at serine 84, serine 100, serine 102, serine 110, serine 113, serine 119, and serine 120. Residue threonine 123 is modified to Phosphothreonine. A Phosphoserine modification is found at serine 134. Arginine 137, arginine 142, arginine 144, arginine 160, arginine 167, and arginine 180 each carry omega-N-methylarginine. Serine 183, serine 187, and serine 203 each carry phosphoserine. Position 205 is an omega-N-methylarginine (arginine 205). The residue at position 275 (threonine 275) is a Phosphothreonine. The residue at position 279 (serine 279) is a Phosphoserine. 2 disordered regions span residues 291–370 (SLDG…RPIP) and 388–501 (RAVL…QTVP). A Phosphothreonine modification is found at threonine 307. Serine 315, serine 331, and serine 338 each carry phosphoserine. Position 340 is a phosphothreonine (threonine 340). Low complexity predominate over residues 359–370 (QPRSTPRQRPIP). Residues 400–424 (APPPKLPPQPPPQPQMQPQPQPQPQ) are compositionally biased toward pro residues. Positions 425–440 (MQPQSQAQPQTPAPQQ) are enriched in low complexity. Phosphoserine is present on residues serine 522, serine 563, and serine 593. The tract at residues 547-614 (FHRHGGPGPG…SVLRKVGSPR (68 aa)) is disordered. The span at 575-597 (PPAPAPPAPIPPPAPPQSSPPEQ) shows a compositional bias: pro residues. ANK repeat units follow at residues 655 to 684 (EGIT…NVNS) and 688 to 717 (HGWT…AIFA). An SH3 domain is found at 754 to 816 (MHNGVVYALW…PRNYFGLFPR (63 aa)).

This sequence belongs to the iASPP family. As to quaternary structure, interacts with TP63 and TP73. Interacts with RELA NF-kappa-B subunit and with SP1 via its C-terminal part. Interacts (via SH3 domain and ANK repeats) with p53/TP53; the interaction inhibits pro-apoptotic activity of p53/TP53. Most abundant in skin with high levels also found in heart, testis and stomach. In 15.5 dpc embryonic heart, expressed at higher levels in atria than ventricles.

The protein resides in the cytoplasm. It localises to the nucleus. Its function is as follows. Regulator that plays a central role in regulation of apoptosis and transcription via its interaction with NF-kappa-B and p53/TP53 proteins. Inhibits p53/TP53 function, possibly by preventing the association between p53/TP53 and ASPP1 or ASPP2, and therefore suppressing the subsequent activation of apoptosis. Is involved in NF-kappa-B dependent negative regulation of inflammatory response. The polypeptide is RelA-associated inhibitor (Mus musculus (Mouse)).